The primary structure comprises 264 residues: Type 1 encapsulin shell protein (264 aa).

It belongs to the encapsulin family. Family 1 subfamily. Forms hollow shells composed of 60 subunits. Monomers probably form pentamers which assemble into the shell. There are 12 pores where the pentamers meet as well as 3-fold axis channels and dimer channels; none are larger than 3-4 Angstroms in diameter. The N-terminus of the protein is inside the shell, the C-terminus is outside.

It localises to the encapsulin nanocompartment. Functionally, shell component of a type 1 encapsulin nanocompartment. Assembles into proteinaceous shells 21-24 nm in diameter. Empty organelles can be expressed in E.coli. Cargo proteins (DypB) are targeted to the interior via their C-terminal extensions. This Rhodococcus erythropolis (strain PR4 / NBRC 100887) protein is Type 1 encapsulin shell protein.